The primary structure comprises 1412 residues: DNA-directed RNA polymerase subunit beta' (1412 aa).

Residues Asp-543, Asp-545, and Asp-547 each contribute to the Mg(2+) site. Residues Cys-1017, Cys-1092, Cys-1099, and Cys-1102 each contribute to the Zn(2+) site.

The protein belongs to the RNA polymerase beta' chain family. In terms of assembly, the RNAP catalytic core consists of 2 alpha, 1 beta, 1 beta' and 1 omega subunit. When a sigma factor is associated with the core the holoenzyme is formed, which can initiate transcription. The cofactor is Mg(2+). It depends on Zn(2+) as a cofactor.

It carries out the reaction RNA(n) + a ribonucleoside 5'-triphosphate = RNA(n+1) + diphosphate. In terms of biological role, DNA-dependent RNA polymerase catalyzes the transcription of DNA into RNA using the four ribonucleoside triphosphates as substrates. The polypeptide is DNA-directed RNA polymerase subunit beta' (Mesomycoplasma hyopneumoniae (strain 232) (Mycoplasma hyopneumoniae)).